Here is a 244-residue protein sequence, read N- to C-terminus: Cell division protein ZapD (244 aa).

Belongs to the ZapD family. In terms of assembly, interacts with FtsZ.

Its subcellular location is the cytoplasm. Functionally, cell division factor that enhances FtsZ-ring assembly. Directly interacts with FtsZ and promotes bundling of FtsZ protofilaments, with a reduction in FtsZ GTPase activity. The protein is Cell division protein ZapD of Shewanella baltica (strain OS185).